Here is a 324-residue protein sequence, read N- to C-terminus: Glyoxylate/hydroxypyruvate reductase B (324 aa).

Residues Arg237 and Glu266 contribute to the active site. The active-site Proton donor is the His285.

Belongs to the D-isomer specific 2-hydroxyacid dehydrogenase family. GhrB subfamily. As to quaternary structure, homodimer.

It localises to the cytoplasm. It catalyses the reaction glycolate + NADP(+) = glyoxylate + NADPH + H(+). It carries out the reaction (R)-glycerate + NAD(+) = 3-hydroxypyruvate + NADH + H(+). The enzyme catalyses (R)-glycerate + NADP(+) = 3-hydroxypyruvate + NADPH + H(+). In terms of biological role, catalyzes the NADPH-dependent reduction of glyoxylate and hydroxypyruvate into glycolate and glycerate, respectively. In Salmonella dublin (strain CT_02021853), this protein is Glyoxylate/hydroxypyruvate reductase B.